The sequence spans 813 residues: Ubiquitin carboxyl-terminal hydrolase 45 (813 aa).

Residues 1-14 are compositionally biased toward basic and acidic residues; that stretch reads MRVKDPSKDLPEKG. Residues 1–27 are disordered; that stretch reads MRVKDPSKDLPEKGKRNKRPLLPHDED. An interaction with ERCC1 region spans residues 1–62; that stretch reads MRVKDPSKDL…AVAESLWSVC (62 aa). A phosphoserine mark is found at serine 28 and serine 29. Residues 36–153 form a UBP-type zinc finger; it reads LTCQHVSYAV…AQIVDFLQKH (118 aa). Cysteine 38, histidine 40, cysteine 62, cysteine 65, cysteine 85, cysteine 88, cysteine 93, histidine 101, histidine 105, histidine 114, cysteine 127, and cysteine 130 together coordinate Zn(2+). Residues 191–812 form the USP domain; sequence KGITNLGNTC…QAYLLFYERI (622 aa). Cysteine 200 (nucleophile) is an active-site residue. Basic and acidic residues-rich tracts occupy residues 405 to 414 and 450 to 466; these read LQETDQDHNK and WPSE…KNDN. Positions 405-552 are disordered; the sequence is LQETDQDHNK…QAKETHGGEE (148 aa). Over residues 472–488 the composition is skewed to polar residues; the sequence is PASTLSTEASLNESLTD. Phosphoserine occurs at positions 507 and 525. Over residues 521–533 the composition is skewed to basic and acidic residues; the sequence is SRGDSCGHAEQHP. Residue histidine 745 is the Proton acceptor of the active site.

The protein belongs to the peptidase C19 family. As to quaternary structure, interacts with ERCC1. The catalytically active form interacts with SPDL1. As to expression, retina.

The protein resides in the photoreceptor inner segment. It localises to the cytoplasm. It is found in the nucleus. It carries out the reaction Thiol-dependent hydrolysis of ester, thioester, amide, peptide and isopeptide bonds formed by the C-terminal Gly of ubiquitin (a 76-residue protein attached to proteins as an intracellular targeting signal).. In terms of biological role, catalyzes the deubiquitination of SPDL1. Plays a role in the repair of UV-induced DNA damage via deubiquitination of ERCC1, promoting its recruitment to DNA damage sites. May be involved in the maintenance of photoreceptor function. May play a role in normal retinal development. Plays a role in cell migration. The protein is Ubiquitin carboxyl-terminal hydrolase 45 (Usp45) of Mus musculus (Mouse).